Consider the following 262-residue polypeptide: Thiazole synthase (262 aa).

The active-site Schiff-base intermediate with DXP is K97. Residues G158, 185–186 (AG), and 207–208 (NT) each bind 1-deoxy-D-xylulose 5-phosphate. The tract at residues 243-262 (DKAQASTPTVGQPFWHSAEY) is disordered.

It belongs to the ThiG family. In terms of assembly, homotetramer. Forms heterodimers with either ThiH or ThiS.

The protein resides in the cytoplasm. The enzyme catalyses [ThiS sulfur-carrier protein]-C-terminal-Gly-aminoethanethioate + 2-iminoacetate + 1-deoxy-D-xylulose 5-phosphate = [ThiS sulfur-carrier protein]-C-terminal Gly-Gly + 2-[(2R,5Z)-2-carboxy-4-methylthiazol-5(2H)-ylidene]ethyl phosphate + 2 H2O + H(+). The protein operates within cofactor biosynthesis; thiamine diphosphate biosynthesis. Catalyzes the rearrangement of 1-deoxy-D-xylulose 5-phosphate (DXP) to produce the thiazole phosphate moiety of thiamine. Sulfur is provided by the thiocarboxylate moiety of the carrier protein ThiS. In vitro, sulfur can be provided by H(2)S. The sequence is that of Thiazole synthase from Neisseria meningitidis serogroup A / serotype 4A (strain DSM 15465 / Z2491).